The following is a 315-amino-acid chain: Beta-ketoacyl-[acyl-carrier-protein] synthase III (315 aa).

Residues C115 and H244 contribute to the active site. Residues 245–249 are ACP-binding; sequence QANAR. N274 is an active-site residue.

The protein belongs to the thiolase-like superfamily. FabH family. Homodimer.

It is found in the cytoplasm. It carries out the reaction malonyl-[ACP] + acetyl-CoA + H(+) = 3-oxobutanoyl-[ACP] + CO2 + CoA. Its pathway is lipid metabolism; fatty acid biosynthesis. In terms of biological role, catalyzes the condensation reaction of fatty acid synthesis by the addition to an acyl acceptor of two carbons from malonyl-ACP. Catalyzes the first condensation reaction which initiates fatty acid synthesis and may therefore play a role in governing the total rate of fatty acid production. Possesses both acetoacetyl-ACP synthase and acetyl transacylase activities. Its substrate specificity determines the biosynthesis of branched-chain and/or straight-chain of fatty acids. The sequence is that of Beta-ketoacyl-[acyl-carrier-protein] synthase III from Rubrobacter xylanophilus (strain DSM 9941 / JCM 11954 / NBRC 16129 / PRD-1).